The primary structure comprises 133 residues: Small ribosomal subunit protein uS8 (133 aa).

It belongs to the universal ribosomal protein uS8 family. Part of the 30S ribosomal subunit.

Functionally, one of the primary rRNA binding proteins, it binds directly to 16S rRNA central domain where it helps coordinate assembly of the platform of the 30S subunit. The chain is Small ribosomal subunit protein uS8 from Hyperthermus butylicus (strain DSM 5456 / JCM 9403 / PLM1-5).